We begin with the raw amino-acid sequence, 155 residues long: Cyanate hydratase (155 aa).

Catalysis depends on residues Arg-95, Glu-98, and Ser-121.

Belongs to the cyanase family.

It carries out the reaction cyanate + hydrogencarbonate + 3 H(+) = NH4(+) + 2 CO2. Catalyzes the reaction of cyanate with bicarbonate to produce ammonia and carbon dioxide. The chain is Cyanate hydratase from Pseudomonas syringae pv. tomato (strain ATCC BAA-871 / DC3000).